The chain runs to 530 residues: Cytochrome P450 monooxygenase aneG (530 aa).

A glycan (N-linked (GlcNAc...) asparagine) is linked at Asn2. Residues 43–63 (WLSILGFTIGCYYVIYTFYAL) form a helical membrane-spanning segment. Asn92 is a glycosylation site (N-linked (GlcNAc...) asparagine). A heme-binding site is contributed by Cys474.

It belongs to the cytochrome P450 family. It depends on heme as a cofactor.

Its subcellular location is the membrane. It carries out the reaction asperaculane E + reduced [NADPH--hemoprotein reductase] + O2 = asperaculane G + oxidized [NADPH--hemoprotein reductase] + H2O + H(+). The catalysed reaction is asperaculane G + reduced [NADPH--hemoprotein reductase] + O2 = aculene D + oxidized [NADPH--hemoprotein reductase] + CO2 + 2 H2O. It catalyses the reaction asperaculane E + 2 reduced [NADPH--hemoprotein reductase] + 2 O2 = aculene D + 2 oxidized [NADPH--hemoprotein reductase] + CO2 + 3 H2O + H(+). Its pathway is secondary metabolite biosynthesis. Functionally, cytochrome P450 monooxygenase; part of the gene cluster that mediates the biosynthesis of aculenes, a unique type of norsesquiterpenes that contain a nordaucane skeleton linked to an L-proline moiety and are of mixed biosynthetic origin. The pathway begins with the synthesis of dauca-4,7-diene by the terpene cyclase aneC using farnesyl pyrophosphate (FPP) as substrate. The cytochrome P450 monooxygenase aneF then performs the initial oxidation at C-12 of dauca-4,7-diene to yield asperaculane D. Asperaculane D is substrate of the cytochrome P450 monooxygenase aneD for C-10 hydroxylation to yield asperaculane E. The cytochrome P450 monooxygenase aneG then converts asperaculane E into aculene D via C-2 oxidation. The monomodular nonribosomal peptide synthtase aneB adenylates L-proline and the thiohydrolase aneE transfers this activated L-proline derivative to aculenes D and C to produce respectively aculenes B and A. The dioxygenase aneA converts aculene D into aculene C, and aculene B into aculene A by introducing the 5,6-alkene moiety. Asperculanes A, B, C and F, as well as 14-prolyl asperculane C, might be shunt products of the pathway. The chain is Cytochrome P450 monooxygenase aneG from Aspergillus aculeatus (strain ATCC 16872 / CBS 172.66 / WB 5094).